We begin with the raw amino-acid sequence, 427 residues long: Phosphatidate cytidylyltransferase, mitochondrial (427 aa).

The span at 94–106 (YNRNGDGSTSTEN) shows a compositional bias: polar residues. A disordered region spans residues 94–113 (YNRNGDGSTSTENPSKKEEQ).

Belongs to the TAM41 family. Mg(2+) serves as cofactor.

It is found in the mitochondrion inner membrane. The catalysed reaction is a 1,2-diacyl-sn-glycero-3-phosphate + CTP + H(+) = a CDP-1,2-diacyl-sn-glycerol + diphosphate. It participates in phospholipid metabolism; CDP-diacylglycerol biosynthesis; CDP-diacylglycerol from sn-glycerol 3-phosphate: step 3/3. Its function is as follows. Catalyzes the formation of CDP-diacylglycerol (CDP-DAG) from phosphatidic acid (PA) in the mitochondrial inner membrane. Required for the biosynthesis of the dimeric phospholipid cardiolipin, which stabilizes supercomplexes of the mitochondrial respiratory chain in the mitochondrial inner membrane. This is Phosphatidate cytidylyltransferase, mitochondrial from Dictyostelium discoideum (Social amoeba).